Here is a 307-residue protein sequence, read N- to C-terminus: Small ribosomal subunit protein uS5m (307 aa).

The transit peptide at 1–13 (MFKRQLSTSVRYL) directs the protein to the mitochondrion. The region spanning 144–208 (LTMKPLVMKR…WDAVRNLKEI (65 aa)) is the S5 DRBM domain.

Belongs to the universal ribosomal protein uS5 family. In terms of assembly, component of the mitochondrial small ribosomal subunit (mt-SSU). Mature yeast 74S mitochondrial ribosomes consist of a small (37S) and a large (54S) subunit. The 37S small subunit contains a 15S ribosomal RNA (15S mt-rRNA) and 34 different proteins. The 54S large subunit contains a 21S rRNA (21S mt-rRNA) and 46 different proteins. uS3m, uS4m and uS5m form the narrow entry site of the mRNA channel.

Its subcellular location is the mitochondrion. Component of the mitochondrial ribosome (mitoribosome), a dedicated translation machinery responsible for the synthesis of mitochondrial genome-encoded proteins, including at least some of the essential transmembrane subunits of the mitochondrial respiratory chain. The mitoribosomes are attached to the mitochondrial inner membrane and translation products are cotranslationally integrated into the membrane. The chain is Small ribosomal subunit protein uS5m (MRPS5) from Saccharomyces cerevisiae (strain ATCC 204508 / S288c) (Baker's yeast).